Consider the following 616-residue polypeptide: Dihydroxy-acid dehydratase (616 aa).

Aspartate 81 provides a ligand contact to Mg(2+). Residue cysteine 122 participates in [2Fe-2S] cluster binding. 2 residues coordinate Mg(2+): aspartate 123 and lysine 124. Lysine 124 is subject to N6-carboxylysine. Cysteine 195 is a binding site for [2Fe-2S] cluster. Glutamate 491 serves as a coordination point for Mg(2+). Serine 517 functions as the Proton acceptor in the catalytic mechanism.

Belongs to the IlvD/Edd family. Homodimer. [2Fe-2S] cluster serves as cofactor. Mg(2+) is required as a cofactor.

The enzyme catalyses (2R)-2,3-dihydroxy-3-methylbutanoate = 3-methyl-2-oxobutanoate + H2O. The catalysed reaction is (2R,3R)-2,3-dihydroxy-3-methylpentanoate = (S)-3-methyl-2-oxopentanoate + H2O. It functions in the pathway amino-acid biosynthesis; L-isoleucine biosynthesis; L-isoleucine from 2-oxobutanoate: step 3/4. The protein operates within amino-acid biosynthesis; L-valine biosynthesis; L-valine from pyruvate: step 3/4. Its function is as follows. Functions in the biosynthesis of branched-chain amino acids. Catalyzes the dehydration of (2R,3R)-2,3-dihydroxy-3-methylpentanoate (2,3-dihydroxy-3-methylvalerate) into 2-oxo-3-methylpentanoate (2-oxo-3-methylvalerate) and of (2R)-2,3-dihydroxy-3-methylbutanoate (2,3-dihydroxyisovalerate) into 2-oxo-3-methylbutanoate (2-oxoisovalerate), the penultimate precursor to L-isoleucine and L-valine, respectively. This is Dihydroxy-acid dehydratase from Escherichia fergusonii (strain ATCC 35469 / DSM 13698 / CCUG 18766 / IAM 14443 / JCM 21226 / LMG 7866 / NBRC 102419 / NCTC 12128 / CDC 0568-73).